A 329-amino-acid chain; its full sequence is Transcription factor RAX1 (329 aa).

2 consecutive HTH myb-type domains span residues 9-62 (KTKV…LNYL) and 63-117 (RPNI…RKKL). 2 consecutive DNA-binding regions (H-T-H motif) follow at residues 38-62 (WISF…LNYL) and 90-113 (WSII…NTKL). 2 stretches are compositionally biased toward low complexity: residues 122–131 (SDSSSSAMAS) and 144–154 (PTSPTTIPSSS). The interval 122 to 162 (SDSSSSAMASPYLNPISQDVKRPTSPTTIPSSSYNPYAENP) is disordered.

As to expression, mostly expressed in roots. Also present in shoot tips and flower buds.

Its subcellular location is the nucleus. Functionally, transcription activator of genes involved in the regulation of meristematic competence, such as CUC2. Positively regulates axillary meristems (AMs) formation and development, especially at early phases of vegetative growth, probably by specifying a stem cell niche for AM formation. Modulates the negative regulation mediated by gibberellic acid on the timing of developmental phase transitions. The sequence is that of Transcription factor RAX1 (RAX1) from Arabidopsis thaliana (Mouse-ear cress).